The primary structure comprises 517 residues: MPSLENPTFQNEARLLLVSNRLPITIKRSDDGRYDFSMSSGGLVSGLSGLSKSTTFQWYGWPGLEVPEEEIPVVKERLKQEYNAVPVFIDDELADRHYNGFSNSILWPLFHYHPGEITFDESAWEAYKEANRLFAKAVAKEVQDGDLIWVHDYHLMLLPEMLREEIGDSKENVKIGFFLHTPFPSSEIYRILPVRNELLLGVLHCDLIGFHTYDYTRHFLSACSRLLGLTTTPNGIEFQGKIIACGAFPIGIDPEKFEEGLKKEKVQKRIAMLEQKFQGVKLMVGVDRLDYIKGVPQKLHALEVFLSDHPEWVGKVVLVQVAVPSRQDVEEYQNLRAVVNELVGRINGKFGTVEFMPIHFLHKSVNFDELIALYAVSDACIVSSTRDGMNLVAYEYIATQKKRHGVLVLSEFAGAAQSLNGSIIINPWNTEELAGAYQEAVTMSDEQRALNFSKLDKYVNKYTSAFWGQSFVTELTRISEHSAEKFHAKKASFSDNNSENGEPSNGVETPAQEQVAQ.

Tyrosine 98 and aspartate 152 together coordinate D-glucose 6-phosphate. Arginine 288 and lysine 293 together coordinate UDP. UDP-alpha-D-glucose is bound by residues arginine 288 and lysine 293. D-glucose 6-phosphate is bound at residue arginine 326. 387-395 (DGMNLVAYE) is a binding site for UDP-alpha-D-glucose. UDP is bound at residue 391–395 (LVAYE). The segment at 486 to 517 (FHAKKASFSDNNSENGEPSNGVETPAQEQVAQ) is disordered. A compositionally biased stretch (polar residues) spans 493–517 (FSDNNSENGEPSNGVETPAQEQVAQ).

This sequence belongs to the glycosyltransferase 20 family.

It catalyses the reaction D-glucose 6-phosphate + UDP-alpha-D-glucose = alpha,alpha-trehalose 6-phosphate + UDP + H(+). It functions in the pathway carbohydrate biosynthesis. In terms of biological role, synthase catalytic subunit of the trehalose synthase complex that catalyzes the production of trehalose from glucose-6-phosphate and UDP-alpha-D-glucose in a two step process. The polypeptide is Alpha,alpha-trehalose-phosphate synthase [UDP-forming] 1 (Aspergillus niger).